We begin with the raw amino-acid sequence, 387 residues long: S-adenosylmethionine synthase (387 aa).

His19 is an ATP binding site. Residue Asp21 coordinates Mg(2+). Residue Glu47 participates in K(+) binding. Residue Gln103 participates in L-methionine binding. The tract at residues 103–113 is flexible loop; sequence QSPDIAQGVEL. ATP contacts are provided by residues 167–169, 233–234, Asp242, 248–249, Ala265, and Lys269; these read DMK, RF, and RK. Asp242 is an L-methionine binding site. Lys273 is an L-methionine binding site.

It belongs to the AdoMet synthase family. In terms of assembly, homotetramer; dimer of dimers. Mg(2+) serves as cofactor. K(+) is required as a cofactor.

It localises to the cytoplasm. The enzyme catalyses L-methionine + ATP + H2O = S-adenosyl-L-methionine + phosphate + diphosphate. Its pathway is amino-acid biosynthesis; S-adenosyl-L-methionine biosynthesis; S-adenosyl-L-methionine from L-methionine: step 1/1. Functionally, catalyzes the formation of S-adenosylmethionine (AdoMet) from methionine and ATP. The overall synthetic reaction is composed of two sequential steps, AdoMet formation and the subsequent tripolyphosphate hydrolysis which occurs prior to release of AdoMet from the enzyme. The protein is S-adenosylmethionine synthase of Mycoplasma capricolum subsp. capricolum (strain California kid / ATCC 27343 / NCTC 10154).